The chain runs to 368 residues: Cobalt-precorrin-5B C(1)-methyltransferase (368 aa).

Belongs to the CbiD family.

The enzyme catalyses Co-precorrin-5B + S-adenosyl-L-methionine = Co-precorrin-6A + S-adenosyl-L-homocysteine. It participates in cofactor biosynthesis; adenosylcobalamin biosynthesis; cob(II)yrinate a,c-diamide from sirohydrochlorin (anaerobic route): step 6/10. In terms of biological role, catalyzes the methylation of C-1 in cobalt-precorrin-5B to form cobalt-precorrin-6A. The chain is Cobalt-precorrin-5B C(1)-methyltransferase from Brucella canis (strain ATCC 23365 / NCTC 10854 / RM-666).